The primary structure comprises 372 residues: Putative 26S proteasome regulatory subunit homolog MTH_1011 (372 aa).

Residue glycine 164–threonine 171 participates in ATP binding.

It belongs to the AAA ATPase family.

In terms of biological role, the 26S proteasome is involved in the ATP-dependent degradation of ubiquitinated proteins. The regulatory (or ATPase) complex confers ATP dependency and substrate specificity to the 26S complex. This is Putative 26S proteasome regulatory subunit homolog MTH_1011 from Methanothermobacter thermautotrophicus (strain ATCC 29096 / DSM 1053 / JCM 10044 / NBRC 100330 / Delta H) (Methanobacterium thermoautotrophicum).